Reading from the N-terminus, the 791-residue chain is IQ motif and ubiquitin-like domain-containing protein (791 aa).

A disordered region spans residues 1–73 (MSNQQEKYEA…SDQSFSSLEP (73 aa)). Positions 131-207 (ATVKVVLIPV…VQVEIFSTNP (77 aa)) constitute a Ubiquitin-like domain. In terms of domain architecture, IQ spans 338–367 (RLKAVIVIQTYYRQWHAKIFVENLRRQKSL).

As to quaternary structure, component of the axonemal radial spoke 1 (RS1) complex, at least composed of spoke head proteins RSPH1, RSPH3, RSPH9 and the cilia-specific component RSPH4A or sperm-specific component RSPH6A, spoke stalk proteins RSPH14, DNAJB13, DYDC1, ROPN1L and NME5, and the anchor protein IQUB. Does not appear to be part of radial spoke complexes 2 or 3 (RS2 or RS3). Interacts with CALM1. Interacts with DNAJB13. Interacts with DYNLL2. Interacts with NME5. Interacts with RSPH3. Interacts with RSPH9. Interacts with ZMYND10. Interacts with calmodulin; the interaction occurs in conditions of low but not high calcium.

The protein resides in the cytoplasm. The protein localises to the cytoskeleton. Its subcellular location is the flagellum axoneme. It localises to the cell projection. It is found in the cilium. Its function is as follows. Adapter protein that anchors the radial spoke 1 (RS1) complex to the A microtubule of outer doublet microtubules in axonemes. The triple radial spokes (RS1, RS2 and RS3) are required to modulate beating of the sperm flagellum. May play a role in inhibiting signaling via MAPK1/ERK2 and MAPK3/ERK1. Additionally, may play a role in the functioning of cilia. Not required for the functioning of tracheal or ependymal cilia. This Homo sapiens (Human) protein is IQ motif and ubiquitin-like domain-containing protein (IQUB).